The primary structure comprises 514 residues: Putative transposase y4uI (514 aa).

One can recognise an HTH IS408-type domain in the interval 11-93 (VREILKLRLD…PDWSAVAREL (83 aa)). Residues 128-317 (HGRLPLVMRQ…TRRALFDELD (190 aa)) form the Integrase catalytic domain.

This sequence belongs to the transposase IS21/IS408/IS1162 family.

In Sinorhizobium fredii (strain NBRC 101917 / NGR234), this protein is Putative transposase y4uI.